The chain runs to 740 residues: Catalase-peroxidase (740 aa).

Residues 1–16 (MSENHDAIVTDAKTEE) are compositionally biased toward basic and acidic residues. The interval 1–38 (MSENHDAIVTDAKTEETDGCPVAHGRAPHPTQGGGNRQ) is disordered. The tryptophyl-tyrosyl-methioninium (Trp-Tyr) (with M-257) cross-link spans 108 to 231 (WHSAGTYRIS…LGAVQMGLIY (124 aa)). The active-site Proton acceptor is H109. The segment at residues 231-257 (YVNPEGPNGNPDPIAAARDIRETFRRM) is a cross-link (tryptophyl-tyrosyl-methioninium (Tyr-Met) (with W-108)). A heme b-binding site is contributed by H272.

Belongs to the peroxidase family. Peroxidase/catalase subfamily. In terms of assembly, homodimer. Heme b is required as a cofactor. Formation of the three residue Trp-Tyr-Met cross-link is important for the catalase, but not the peroxidase activity of the enzyme.

The catalysed reaction is H2O2 + AH2 = A + 2 H2O. The enzyme catalyses 2 H2O2 = O2 + 2 H2O. Bifunctional enzyme with both catalase and broad-spectrum peroxidase activity. The polypeptide is Catalase-peroxidase (Streptomyces coelicolor (strain ATCC BAA-471 / A3(2) / M145)).